Reading from the N-terminus, the 72-residue chain is Translation initiation factor IF-1 (72 aa).

An S1-like domain is found at 1–72; it reads MAKEEQIELE…TKGRITFRMK (72 aa).

The protein belongs to the IF-1 family. Component of the 30S ribosomal translation pre-initiation complex which assembles on the 30S ribosome in the order IF-2 and IF-3, IF-1 and N-formylmethionyl-tRNA(fMet); mRNA recruitment can occur at any time during PIC assembly.

It is found in the cytoplasm. In terms of biological role, one of the essential components for the initiation of protein synthesis. Stabilizes the binding of IF-2 and IF-3 on the 30S subunit to which N-formylmethionyl-tRNA(fMet) subsequently binds. Helps modulate mRNA selection, yielding the 30S pre-initiation complex (PIC). Upon addition of the 50S ribosomal subunit IF-1, IF-2 and IF-3 are released leaving the mature 70S translation initiation complex. The chain is Translation initiation factor IF-1 from Alcanivorax borkumensis (strain ATCC 700651 / DSM 11573 / NCIMB 13689 / SK2).